A 374-amino-acid polypeptide reads, in one-letter code: RNA polymerase sigma factor SigA (374 aa).

Residues 141–211 (LAEANLRLVV…TRAIADQART (71 aa)) form a sigma-70 factor domain-2 region. The Interaction with polymerase core subunit RpoC motif lies at 165-168 (DLIQ). Positions 220–296 (ETINKLIRVQ…DQDATSPSDH (77 aa)) are sigma-70 factor domain-3. The interval 309–362 (VLDTLTDREENVLRLRFGLDDGRTRTLEEVGRVFGVTRERIRQIEAKALRKLRH) is sigma-70 factor domain-4. The H-T-H motif DNA-binding region spans 335-354 (LEEVGRVFGVTRERIRQIEA).

The protein belongs to the sigma-70 factor family. RpoD/SigA subfamily. As to quaternary structure, interacts transiently with the RNA polymerase catalytic core.

It localises to the cytoplasm. Sigma factors are initiation factors that promote the attachment of RNA polymerase to specific initiation sites and are then released. This sigma factor is the primary sigma factor during exponential growth. The sequence is that of RNA polymerase sigma factor SigA from Listeria innocua serovar 6a (strain ATCC BAA-680 / CLIP 11262).